The sequence spans 40 residues: Putative protein FAM86JP (40 aa).

The interval 1-40 is disordered; sequence MPGAFSQNSSKRRAVLPRSHRVAGRGPAEAGCLPGAPAGS. A compositionally biased stretch (basic residues) spans 10–23; sequence SKRRAVLPRSHRVA.

The polypeptide is Putative protein FAM86JP (Homo sapiens (Human)).